The sequence spans 85 residues: HssA/B-like protein 62 (85 aa).

This sequence belongs to the hssA/B family.

In Dictyostelium discoideum (Social amoeba), this protein is HssA/B-like protein 62 (hssl62).